The sequence spans 143 residues: Mannitol-specific phosphotransferase enzyme IIA component (143 aa).

In terms of domain architecture, PTS EIIA type-2 spans 1–142; the sequence is MKLLKNNIYI…DKVLEFLAKH (142 aa). The Tele-phosphohistidine intermediate role is filled by H61. Phosphohistidine; by HPr is present on H61.

It localises to the cytoplasm. In terms of biological role, the phosphoenolpyruvate-dependent sugar phosphotransferase system (sugar PTS), a major carbohydrate active transport system, catalyzes the phosphorylation of incoming sugar substrates concomitantly with their translocation across the cell membrane. The enzyme II CmtAB PTS system is involved in D-mannitol transport. The protein is Mannitol-specific phosphotransferase enzyme IIA component (mtlF) of Mycoplasma pneumoniae (strain ATCC 29342 / M129 / Subtype 1) (Mycoplasmoides pneumoniae).